Consider the following 142-residue polypeptide: Transcriptional regulator MraZ (142 aa).

2 SpoVT-AbrB domains span residues 5-47 and 76-119; these read RFTH…PMDS and ATVV…SPEN.

The protein belongs to the MraZ family. Forms oligomers.

The protein localises to the cytoplasm. The protein resides in the nucleoid. This Thermomicrobium roseum (strain ATCC 27502 / DSM 5159 / P-2) protein is Transcriptional regulator MraZ.